The chain runs to 390 residues: Prostaglandin E2 receptor EP3 subtype (390 aa).

The Extracellular portion of the chain corresponds to 1–53 (MKETRGYGGDAPFCTRLNHSYTGMWAPERSAEARGNLTRPPGSGEDCGSVSVA). N-linked (GlcNAc...) asparagine glycans are attached at residues Asn18 and Asn36. A helical membrane pass occupies residues 54–78 (FPITMLLTGFVGNALAMLLVSRSYR). The Cytoplasmic segment spans residues 79–91 (RRESKRKKSFLLC). The chain crosses the membrane as a helical span at residues 92–112 (IGWLALTDLVGQLLTTPVVIV). Topologically, residues 113-131 (VYLSKQRWEHIDPSGRLCT) are extracellular. Residues 132–153 (FFGLTMTVFGLSSLFIASAMAV) traverse the membrane as a helical segment. At 154 to 175 (ERALAIRAPHWYASHMKTRATR) the chain is on the cytoplasmic side. The helical transmembrane segment at 176–197 (AVLLGVWLAVLAFALLPVLGVG) threads the bilayer. Topologically, residues 198-227 (QYTVQWPGTWCFISTGRGGNGTSSSHNWGN) are extracellular. Residues 228–253 (LFFASAFAFLGLLALTVTFSCNLATI) traverse the membrane as a helical segment. The Cytoplasmic portion of the chain corresponds to 254-283 (KALVSRCRAKATASQSSAQWGRITTETAIQ). The chain crosses the membrane as a helical span at residues 284–307 (LMGIMCVLSVCWSPLLIMMLKMIF). At 308–327 (NQTSVEHCKTHTEKQKECNF) the chain is on the extracellular side. The chain crosses the membrane as a helical span at residues 328–349 (FLIAVRLASLNQILDPWVYLLL). Residues 350–390 (RKILLRKFCQIRYHTNNYASSSTSLPCQCSSTLMWSDHLER) lie on the Cytoplasmic side of the membrane.

It belongs to the G-protein coupled receptor 1 family. In terms of assembly, interacts (via C-terminus) with MKLN1. Detected in kidney. Expressed in small intestine, heart, pancreas, gastric fundic mucosa, mammary artery and pulmonary vessels.

The protein resides in the cell membrane. Functionally, receptor for prostaglandin E2 (PGE2). The activity of this receptor can couple to both the inhibition of adenylate cyclase mediated by G(i) proteins, and to an elevation of intracellular calcium. Required for normal development of fever in response to pyrinogens, including IL1B, prostaglandin E2 and bacterial lipopolysaccharide (LPS). Required for normal potentiation of platelet aggregation by prostaglandin E2, and thus plays a role in the regulation of blood coagulation. Required for increased HCO3(-) secretion in the duodenum in response to mucosal acidification, and thereby contributes to the protection of the mucosa against acid-induced ulceration. Not required for normal kidney function, normal urine volume and osmolality. The chain is Prostaglandin E2 receptor EP3 subtype (PTGER3) from Homo sapiens (Human).